The following is a 219-amino-acid chain: ATP-dependent Clp protease proteolytic subunit 4 (219 aa).

Serine 125 (nucleophile) is an active-site residue. The active site involves histidine 150.

Belongs to the peptidase S14 family. Fourteen ClpP subunits assemble into 2 heptameric rings which stack back to back to give a disk-like structure with a central cavity, resembling the structure of eukaryotic proteasomes.

The protein resides in the cytoplasm. It carries out the reaction Hydrolysis of proteins to small peptides in the presence of ATP and magnesium. alpha-casein is the usual test substrate. In the absence of ATP, only oligopeptides shorter than five residues are hydrolyzed (such as succinyl-Leu-Tyr-|-NHMec, and Leu-Tyr-Leu-|-Tyr-Trp, in which cleavage of the -Tyr-|-Leu- and -Tyr-|-Trp bonds also occurs).. Its function is as follows. Cleaves peptides in various proteins in a process that requires ATP hydrolysis. Has a chymotrypsin-like activity. Plays a major role in the degradation of misfolded proteins. This chain is ATP-dependent Clp protease proteolytic subunit 4, found in Prochlorococcus marinus (strain MIT 9312).